The following is a 422-amino-acid chain: Enolase (422 aa).

Position 161 (Gln-161) interacts with (2R)-2-phosphoglycerate. Glu-203 functions as the Proton donor in the catalytic mechanism. Positions 240, 283, and 310 each coordinate Mg(2+). Residues Lys-335, Arg-364, Ser-365, and Lys-386 each contribute to the (2R)-2-phosphoglycerate site. Lys-335 acts as the Proton acceptor in catalysis.

It belongs to the enolase family. The cofactor is Mg(2+).

It is found in the cytoplasm. It localises to the secreted. The protein resides in the cell surface. It catalyses the reaction (2R)-2-phosphoglycerate = phosphoenolpyruvate + H2O. It functions in the pathway carbohydrate degradation; glycolysis; pyruvate from D-glyceraldehyde 3-phosphate: step 4/5. In terms of biological role, catalyzes the reversible conversion of 2-phosphoglycerate (2-PG) into phosphoenolpyruvate (PEP). It is essential for the degradation of carbohydrates via glycolysis. The sequence is that of Enolase from Deinococcus radiodurans (strain ATCC 13939 / DSM 20539 / JCM 16871 / CCUG 27074 / LMG 4051 / NBRC 15346 / NCIMB 9279 / VKM B-1422 / R1).